A 215-amino-acid chain; its full sequence is CASP-like protein 1E1 (215 aa).

At 1–51 (MESSRGKPGLNGSGGGAAAFDYSSRRGYYTGAGAALPPLAAGSRAPPVDPC) the chain is on the cytoplasmic side. The helical transmembrane segment at 52 to 72 (CVVLRVFVLLGTLASAVVMAA) threads the bilayer. At 73 to 103 (DRQSTTVQIAAGEELAPPLRVPVTAKWTYSS) the chain is on the extracellular side. Residues 104–124 (AFVYFVVANAMVFAFSAAALA) traverse the membrane as a helical segment. The Cytoplasmic portion of the chain corresponds to 125–130 (AVRRRS). The helical transmembrane segment at 131 to 151 (AVVPVMVGDLVAMALLFSAVG) threads the bilayer. At 152–185 (AAAQFGLLGERGNAHVRWAKVCDVYGPFCERAMA) the chain is on the extracellular side. A helical transmembrane segment spans residues 186-206 (AVVVALIAAFADLVLLMLTIL). Residues 207-215 (TIHKASSYY) lie on the Cytoplasmic side of the membrane.

This sequence belongs to the Casparian strip membrane proteins (CASP) family. In terms of assembly, homodimer and heterodimers.

The protein resides in the cell membrane. In Oryza sativa subsp. japonica (Rice), this protein is CASP-like protein 1E1.